Reading from the N-terminus, the 240-residue chain is 4-hydroxy-tetrahydrodipicolinate reductase (240 aa).

NAD(+) is bound by residues 79-81 (ATT) and 103-106 (SANM). Catalysis depends on H135, which acts as the Proton donor/acceptor. H136 provides a ligand contact to (S)-2,3,4,5-tetrahydrodipicolinate. Catalysis depends on K139, which acts as the Proton donor. A (S)-2,3,4,5-tetrahydrodipicolinate-binding site is contributed by 145 to 146 (GT).

Belongs to the DapB family.

It localises to the cytoplasm. It carries out the reaction (S)-2,3,4,5-tetrahydrodipicolinate + NAD(+) + H2O = (2S,4S)-4-hydroxy-2,3,4,5-tetrahydrodipicolinate + NADH + H(+). It catalyses the reaction (S)-2,3,4,5-tetrahydrodipicolinate + NADP(+) + H2O = (2S,4S)-4-hydroxy-2,3,4,5-tetrahydrodipicolinate + NADPH + H(+). The protein operates within amino-acid biosynthesis; L-lysine biosynthesis via DAP pathway; (S)-tetrahydrodipicolinate from L-aspartate: step 4/4. Catalyzes the conversion of 4-hydroxy-tetrahydrodipicolinate (HTPA) to tetrahydrodipicolinate. The protein is 4-hydroxy-tetrahydrodipicolinate reductase of Staphylococcus saprophyticus subsp. saprophyticus (strain ATCC 15305 / DSM 20229 / NCIMB 8711 / NCTC 7292 / S-41).